The chain runs to 211 residues: Protein-methionine-sulfoxide reductase heme-binding subunit MsrQ (211 aa).

6 helical membrane-spanning segments follow: residues 8–28 (VIWLKVCLHLAGLLPFLWLVW), 54–74 (FLLAALLITPLARYAKQPLLI), 82–102 (LWCFAWATLHLTSYALLELGV), 116–136 (PYLTLGIISWVILLALAFTST), 153–173 (FVYLVAILAPIHYLWSVKIIS), and 178–198 (IYAGLAVLLLALRYKKLLSLF).

This sequence belongs to the MsrQ family. As to quaternary structure, heterodimer of a catalytic subunit (MsrP) and a heme-binding subunit (MsrQ). The cofactor is FMN. Requires heme b as cofactor.

It is found in the cell inner membrane. Part of the MsrPQ system that repairs oxidized periplasmic proteins containing methionine sulfoxide residues (Met-O), using respiratory chain electrons. Thus protects these proteins from oxidative-stress damage caused by reactive species of oxygen and chlorine generated by the host defense mechanisms. MsrPQ is essential for the maintenance of envelope integrity under bleach stress, rescuing a wide series of structurally unrelated periplasmic proteins from methionine oxidation, including the primary periplasmic chaperone SurA and the lipoprotein Pal. MsrQ provides electrons for reduction to the reductase catalytic subunit MsrP, using the quinone pool of the respiratory chain. The polypeptide is Protein-methionine-sulfoxide reductase heme-binding subunit MsrQ (Shigella flexneri).